Reading from the N-terminus, the 317-residue chain is Nuclear distribution protein nudE homolog (317 aa).

A coiled-coil region spans residues 29-180 (TDVKQEYDEF…LKQELNVKSR (152 aa)). The tract at residues 186–205 (NGTSVPTANDTNTVNSSMNS) is disordered.

The protein belongs to the nudE family.

Its subcellular location is the cytoplasm. The protein localises to the cytoskeleton. The protein resides in the microtubule organizing center. It localises to the centrosome. It is found in the spindle. Chaperone protein with functions in nuclear localization. Required for centrosome duplication and formation and function of the mitotic spindle. In postmitotic neurons, acts with nudC downstream of dar1 to ensure correct positioning of the nuclei in primary dendrites and as a consequence, is required for determining multipolar neuron morphology. This Drosophila melanogaster (Fruit fly) protein is Nuclear distribution protein nudE homolog.